Consider the following 420-residue polypeptide: D-tagatose-1,6-bisphosphate aldolase subunit GatZ (420 aa).

The protein belongs to the GatZ/KbaZ family. GatZ subfamily. In terms of assembly, forms a complex with GatY.

It participates in carbohydrate metabolism; D-tagatose 6-phosphate degradation; D-glyceraldehyde 3-phosphate and glycerone phosphate from D-tagatose 6-phosphate: step 2/2. Functionally, component of the tagatose-1,6-bisphosphate aldolase GatYZ that is required for full activity and stability of the Y subunit. Could have a chaperone-like function for the proper and stable folding of GatY. When expressed alone, GatZ does not show any aldolase activity. Is involved in the catabolism of galactitol. This Shigella flexneri serotype 5b (strain 8401) protein is D-tagatose-1,6-bisphosphate aldolase subunit GatZ.